The sequence spans 295 residues: Glutamyl-Q tRNA(Asp) synthetase (295 aa).

L-glutamate contacts are provided by residues 6–10 and Glu-42; that span reads RFAPS. A 'HIGH' region motif is present at residues 9–19; sequence PSPTGAMHLGN. Positions 93, 95, 118, and 122 each coordinate Zn(2+). Residues Tyr-177 and Arg-195 each contribute to the L-glutamate site. The 'KMSKS' region motif lies at 233–237; that stretch reads RLAKR. Lys-236 is a binding site for ATP.

The protein belongs to the class-I aminoacyl-tRNA synthetase family. GluQ subfamily. Requires Zn(2+) as cofactor.

Its function is as follows. Catalyzes the tRNA-independent activation of glutamate in presence of ATP and the subsequent transfer of glutamate onto a tRNA(Asp). Glutamate is transferred on the 2-amino-5-(4,5-dihydroxy-2-cyclopenten-1-yl) moiety of the queuosine in the wobble position of the QUC anticodon. The chain is Glutamyl-Q tRNA(Asp) synthetase from Deinococcus radiodurans (strain ATCC 13939 / DSM 20539 / JCM 16871 / CCUG 27074 / LMG 4051 / NBRC 15346 / NCIMB 9279 / VKM B-1422 / R1).